A 483-amino-acid polypeptide reads, in one-letter code: Protein nucleotidyltransferase YdiU (483 aa).

ATP contacts are provided by Gly87, Gly89, Arg90, Lys110, Asp122, Gly123, Arg173, and Arg180. Asp249 serves as the catalytic Proton acceptor. 2 residues coordinate Mg(2+): Asn250 and Asp259. Asp259 provides a ligand contact to ATP.

The protein belongs to the SELO family. Requires Mg(2+) as cofactor. Mn(2+) is required as a cofactor.

It carries out the reaction L-seryl-[protein] + ATP = 3-O-(5'-adenylyl)-L-seryl-[protein] + diphosphate. The catalysed reaction is L-threonyl-[protein] + ATP = 3-O-(5'-adenylyl)-L-threonyl-[protein] + diphosphate. It catalyses the reaction L-tyrosyl-[protein] + ATP = O-(5'-adenylyl)-L-tyrosyl-[protein] + diphosphate. The enzyme catalyses L-histidyl-[protein] + UTP = N(tele)-(5'-uridylyl)-L-histidyl-[protein] + diphosphate. It carries out the reaction L-seryl-[protein] + UTP = O-(5'-uridylyl)-L-seryl-[protein] + diphosphate. The catalysed reaction is L-tyrosyl-[protein] + UTP = O-(5'-uridylyl)-L-tyrosyl-[protein] + diphosphate. In terms of biological role, nucleotidyltransferase involved in the post-translational modification of proteins. It can catalyze the addition of adenosine monophosphate (AMP) or uridine monophosphate (UMP) to a protein, resulting in modifications known as AMPylation and UMPylation. The chain is Protein nucleotidyltransferase YdiU from Yersinia pseudotuberculosis serotype O:1b (strain IP 31758).